The following is a 745-amino-acid chain: TonB-dependent heme receptor A (745 aa).

Residues 1-24 (MNILINKRIFLLVTLVGIQLNVTA) form the signal peptide. In terms of domain architecture, TBDR plug spans 45–157 (DDSNKLPGRS…FAGTVKFETK (113 aa)). The 578-residue stretch at 168–745 (KIGGFLKYGN…NIKFSLSQKF (578 aa)) folds into the TBDR beta-barrel domain.

This sequence belongs to the TonB-dependent receptor family.

Its subcellular location is the cell outer membrane. Its function is as follows. Heme receptor. The sequence is that of TonB-dependent heme receptor A (tdhA) from Haemophilus influenzae (strain 86-028NP).